The chain runs to 209 residues: ATP-dependent dethiobiotin synthetase BioD (209 aa).

ATP is bound at residue 13–18; sequence DIGKTV. Residue threonine 17 participates in Mg(2+) binding. Lysine 33 is a catalytic residue. Mg(2+) contacts are provided by arginine 47 and glutamate 100. ATP-binding positions include 100 to 103 and 184 to 186; these read EGAG and PRL.

Belongs to the dethiobiotin synthetase family. As to quaternary structure, homodimer. Requires Mg(2+) as cofactor.

The protein resides in the cytoplasm. The catalysed reaction is (7R,8S)-7,8-diammoniononanoate + CO2 + ATP = (4R,5S)-dethiobiotin + ADP + phosphate + 3 H(+). Its pathway is cofactor biosynthesis; biotin biosynthesis; biotin from 7,8-diaminononanoate: step 1/2. In terms of biological role, catalyzes a mechanistically unusual reaction, the ATP-dependent insertion of CO2 between the N7 and N8 nitrogen atoms of 7,8-diaminopelargonic acid (DAPA, also called 7,8-diammoniononanoate) to form a ureido ring. The chain is ATP-dependent dethiobiotin synthetase BioD from Rhodopseudomonas palustris (strain BisB18).